The chain runs to 262 residues: Hydroxyethylthiazole kinase (262 aa).

Residue methionine 50 participates in substrate binding. ATP is bound by residues arginine 125 and threonine 171. Residue glycine 198 participates in substrate binding.

Belongs to the Thz kinase family. Mg(2+) serves as cofactor.

It carries out the reaction 5-(2-hydroxyethyl)-4-methylthiazole + ATP = 4-methyl-5-(2-phosphooxyethyl)-thiazole + ADP + H(+). Its pathway is cofactor biosynthesis; thiamine diphosphate biosynthesis; 4-methyl-5-(2-phosphoethyl)-thiazole from 5-(2-hydroxyethyl)-4-methylthiazole: step 1/1. Catalyzes the phosphorylation of the hydroxyl group of 4-methyl-5-beta-hydroxyethylthiazole (THZ). This is Hydroxyethylthiazole kinase from Escherichia coli O45:K1 (strain S88 / ExPEC).